We begin with the raw amino-acid sequence, 178 residues long: 3-hydroxyacyl-[acyl-carrier-protein] dehydratase FabZ (178 aa).

His-54 is an active-site residue.

It belongs to the thioester dehydratase family. FabZ subfamily.

It is found in the cytoplasm. The catalysed reaction is a (3R)-hydroxyacyl-[ACP] = a (2E)-enoyl-[ACP] + H2O. Involved in unsaturated fatty acids biosynthesis. Catalyzes the dehydration of short chain beta-hydroxyacyl-ACPs and long chain saturated and unsaturated beta-hydroxyacyl-ACPs. The polypeptide is 3-hydroxyacyl-[acyl-carrier-protein] dehydratase FabZ (Yersinia enterocolitica).